Here is a 94-residue protein sequence, read N- to C-terminus: Large ribosomal subunit protein bL25 (94 aa).

The protein belongs to the bacterial ribosomal protein bL25 family. In terms of assembly, part of the 50S ribosomal subunit; part of the 5S rRNA/L5/L18/L25 subcomplex. Contacts the 5S rRNA. Binds to the 5S rRNA independently of L5 and L18.

In terms of biological role, this is one of the proteins that binds to the 5S RNA in the ribosome where it forms part of the central protuberance. The sequence is that of Large ribosomal subunit protein bL25 from Shigella boydii serotype 4 (strain Sb227).